The following is a 427-amino-acid chain: Glutamate-1-semialdehyde 2,1-aminomutase (427 aa).

K264 is modified (N6-(pyridoxal phosphate)lysine).

The protein belongs to the class-III pyridoxal-phosphate-dependent aminotransferase family. HemL subfamily. As to quaternary structure, homodimer. Pyridoxal 5'-phosphate serves as cofactor.

Its subcellular location is the cytoplasm. The enzyme catalyses (S)-4-amino-5-oxopentanoate = 5-aminolevulinate. It participates in porphyrin-containing compound metabolism; protoporphyrin-IX biosynthesis; 5-aminolevulinate from L-glutamyl-tRNA(Glu): step 2/2. The chain is Glutamate-1-semialdehyde 2,1-aminomutase from Campylobacter concisus (strain 13826).